We begin with the raw amino-acid sequence, 158 residues long: uncharacterized protein (158 aa).

A helical transmembrane segment spans residues 33-53; the sequence is VLAAVPQLGAAKVLVLLLLGV.

Its subcellular location is the membrane. This is an uncharacterized protein from Saccharomyces cerevisiae (strain ATCC 204508 / S288c) (Baker's yeast).